The chain runs to 387 residues: uncharacterized protein (387 aa).

This sequence to M.jannaschii MJ0043 N-terminal region.

This is an uncharacterized protein from Bacillus subtilis (strain 168).